Here is a 386-residue protein sequence, read N- to C-terminus: Homoserine O-succinyltransferase (386 aa).

In terms of domain architecture, AB hydrolase-1 spans 49 to 358 (NAILICHALS…DAEQGHDSFL (310 aa)). Serine 156 acts as the Nucleophile in catalysis. A substrate-binding site is contributed by arginine 226. Active-site residues include aspartate 321 and histidine 354. Position 355 (aspartate 355) interacts with substrate.

This sequence belongs to the AB hydrolase superfamily. MetX family. As to quaternary structure, homodimer.

It is found in the cytoplasm. It carries out the reaction L-homoserine + succinyl-CoA = O-succinyl-L-homoserine + CoA. Its pathway is amino-acid biosynthesis; L-methionine biosynthesis via de novo pathway; O-succinyl-L-homoserine from L-homoserine: step 1/1. In terms of biological role, transfers a succinyl group from succinyl-CoA to L-homoserine, forming succinyl-L-homoserine. This Acinetobacter baumannii (strain SDF) protein is Homoserine O-succinyltransferase.